A 170-amino-acid polypeptide reads, in one-letter code: Peptide deformylase (170 aa).

Fe cation is bound by residues Cys91 and His133. Glu134 is a catalytic residue. His137 serves as a coordination point for Fe cation.

Belongs to the polypeptide deformylase family. It depends on Fe(2+) as a cofactor.

The catalysed reaction is N-terminal N-formyl-L-methionyl-[peptide] + H2O = N-terminal L-methionyl-[peptide] + formate. Functionally, removes the formyl group from the N-terminal Met of newly synthesized proteins. Requires at least a dipeptide for an efficient rate of reaction. N-terminal L-methionine is a prerequisite for activity but the enzyme has broad specificity at other positions. In Yersinia enterocolitica serotype O:8 / biotype 1B (strain NCTC 13174 / 8081), this protein is Peptide deformylase.